Here is a 300-residue protein sequence, read N- to C-terminus: UDP-N-acetylenolpyruvoylglucosamine reductase (300 aa).

Positions 28–190 (KIGGRVKYLV…TRAMMSFKKE (163 aa)) constitute an FAD-binding PCMH-type domain. R169 is a catalytic residue. S219 acts as the Proton donor in catalysis. E290 is an active-site residue.

The protein belongs to the MurB family. FAD is required as a cofactor.

The protein resides in the cytoplasm. It carries out the reaction UDP-N-acetyl-alpha-D-muramate + NADP(+) = UDP-N-acetyl-3-O-(1-carboxyvinyl)-alpha-D-glucosamine + NADPH + H(+). It functions in the pathway cell wall biogenesis; peptidoglycan biosynthesis. Its function is as follows. Cell wall formation. The chain is UDP-N-acetylenolpyruvoylglucosamine reductase from Thermotoga sp. (strain RQ2).